Reading from the N-terminus, the 353-residue chain is D-alanine--D-alanine ligase (353 aa).

The ATP-grasp domain maps to 141–349; the sequence is KAAFAAAGLP…LEELVSQLVI (209 aa). Position 176–231 (176–231) interacts with ATP; the sequence is EAKLKYPCFVKPANLGSSVGISKAQNRNELLIGLDKAASLDRRIVVEQGVSARELE. 3 residues coordinate Mg(2+): D302, E316, and N318.

The protein belongs to the D-alanine--D-alanine ligase family. Mg(2+) serves as cofactor. The cofactor is Mn(2+).

The protein resides in the cytoplasm. The catalysed reaction is 2 D-alanine + ATP = D-alanyl-D-alanine + ADP + phosphate + H(+). It participates in cell wall biogenesis; peptidoglycan biosynthesis. In terms of biological role, cell wall formation. This Prochlorococcus marinus (strain MIT 9303) protein is D-alanine--D-alanine ligase.